The primary structure comprises 130 residues: Protein ApaG (130 aa).

Residues 3–127 (KAETRGITVT…FSLDSPHLRR (125 aa)) form the ApaG domain.

This is Protein ApaG from Methylorubrum populi (strain ATCC BAA-705 / NCIMB 13946 / BJ001) (Methylobacterium populi).